The chain runs to 296 residues: Antisense-enhancing sequence 1 (296 aa).

E47 is a catalytic residue.

This sequence belongs to the PhzF family.

In terms of biological role, may have isomerase activity. Enhances target gene silencing when coexpressed with antisense RNA. The protein is Antisense-enhancing sequence 1 (aes1) of Schizosaccharomyces pombe (strain 972 / ATCC 24843) (Fission yeast).